Here is a 407-residue protein sequence, read N- to C-terminus: Phosphoglycerate kinase (407 aa).

Substrate-binding positions include 24–26, R40, 63–66, R121, and R154; these read DFN and HLGR. ATP is bound by residues K205, E337, and 363 to 366; that span reads GGDS.

Belongs to the phosphoglycerate kinase family. As to quaternary structure, monomer.

Its subcellular location is the cytoplasm. It carries out the reaction (2R)-3-phosphoglycerate + ATP = (2R)-3-phospho-glyceroyl phosphate + ADP. Its pathway is carbohydrate degradation; glycolysis; pyruvate from D-glyceraldehyde 3-phosphate: step 2/5. This chain is Phosphoglycerate kinase, found in Gloeobacter violaceus (strain ATCC 29082 / PCC 7421).